The sequence spans 307 residues: Thioredoxin-related transmembrane protein 2-B (307 aa).

Residues 1-19 (MALLTPLFAFLYHLPQVYK) form the signal peptide. At 20–111 (WLLKPYYIAS…VILFFRLDIR (92 aa)) the chain is on the extracellular side. A helical membrane pass occupies residues 112–132 (LGLLYLTLCIVFLMTCKPPLY). The region spanning 132 to 269 (YMGPEYIKYF…LYQKSKKLGK (138 aa)) is the Thioredoxin domain. Topologically, residues 133-307 (MGPEYIKYFS…AMDTESKKDK (175 aa)) are cytoplasmic. The segment at 268-307 (GKTKEKLERPSELVFSTVPEEEEPEAETISAMDTESKKDK) is disordered. A compositionally biased stretch (basic and acidic residues) spans 269-278 (KTKEKLERPS). The Di-lysine motif signature appears at 304–307 (KKDK).

Monomer. Homodimer; disulfide-linked. Occurs in both reduced and oxidized monomeric form. Oxidative conditions increase homodimerization.

The protein localises to the endoplasmic reticulum membrane. The protein resides in the mitochondrion membrane. In terms of biological role, endoplasmic reticulum and mitochondria-associated protein that probably functions as a regulator of cellular redox state and thereby regulates protein post-translational modification, protein folding and mitochondrial activity. This chain is Thioredoxin-related transmembrane protein 2-B (tmx2b), found in Danio rerio (Zebrafish).